Consider the following 705-residue polypeptide: Elongation factor G (705 aa).

In terms of domain architecture, tr-type G spans 7-287; it reads HLTRNIGIMA…YVCAFLPSPL (281 aa). Residues 16–23, 84–88, and 138–141 contribute to the GTP site; these read AHIDAGKT, DTPGH, and NKMD. The disordered stretch occupies residues 291-312; that stretch reads NVVGTNPDTGAEEDRKPSEDDK. Residues 302–312 show a composition bias toward basic and acidic residues; it reads EEDRKPSEDDK.

The protein belongs to the TRAFAC class translation factor GTPase superfamily. Classic translation factor GTPase family. EF-G/EF-2 subfamily.

The protein localises to the cytoplasm. Catalyzes the GTP-dependent ribosomal translocation step during translation elongation. During this step, the ribosome changes from the pre-translocational (PRE) to the post-translocational (POST) state as the newly formed A-site-bound peptidyl-tRNA and P-site-bound deacylated tRNA move to the P and E sites, respectively. Catalyzes the coordinated movement of the two tRNA molecules, the mRNA and conformational changes in the ribosome. This is Elongation factor G from Bacteroides fragilis (strain ATCC 25285 / DSM 2151 / CCUG 4856 / JCM 11019 / LMG 10263 / NCTC 9343 / Onslow / VPI 2553 / EN-2).